Reading from the N-terminus, the 359-residue chain is tRNA-specific 2-thiouridylase MnmA (359 aa).

ATP-binding positions include 11-18 and Ile-37; that span reads GISGGVDS. Catalysis depends on Cys-99, which acts as the Nucleophile. Residues Cys-99 and Cys-195 are joined by a disulfide bond. ATP is bound at residue Gly-123. Positions 145 to 147 are interaction with tRNA; sequence KDQ. The active-site Cysteine persulfide intermediate is Cys-195. The interaction with tRNA stretch occupies residues 304 to 305; sequence RY.

It belongs to the MnmA/TRMU family.

The protein resides in the cytoplasm. It catalyses the reaction S-sulfanyl-L-cysteinyl-[protein] + uridine(34) in tRNA + AH2 + ATP = 2-thiouridine(34) in tRNA + L-cysteinyl-[protein] + A + AMP + diphosphate + H(+). Its function is as follows. Catalyzes the 2-thiolation of uridine at the wobble position (U34) of tRNA, leading to the formation of s(2)U34. This chain is tRNA-specific 2-thiouridylase MnmA, found in Chlorobium phaeobacteroides (strain BS1).